A 131-amino-acid chain; its full sequence is UPF0102 protein YraN (131 aa).

The span at 1–19 (MATVPTRSGSPRQLTTKQT) shows a compositional bias: polar residues. The disordered stretch occupies residues 1 to 20 (MATVPTRSGSPRQLTTKQTG).

Belongs to the UPF0102 family.

The polypeptide is UPF0102 protein YraN (Escherichia coli O157:H7).